Consider the following 169-residue polypeptide: Ribosome maturation factor RimM (169 aa).

In terms of domain architecture, PRC barrel spans 97-169 (EDEYYWADLV…TITADWGLDY (73 aa)).

The protein belongs to the RimM family. In terms of assembly, binds ribosomal protein uS19.

The protein localises to the cytoplasm. Its function is as follows. An accessory protein needed during the final step in the assembly of 30S ribosomal subunit, possibly for assembly of the head region. Essential for efficient processing of 16S rRNA. May be needed both before and after RbfA during the maturation of 16S rRNA. It has affinity for free ribosomal 30S subunits but not for 70S ribosomes. This Neisseria gonorrhoeae (strain ATCC 700825 / FA 1090) protein is Ribosome maturation factor RimM.